The sequence spans 612 residues: Elongation factor 4 (612 aa).

Residues 11-193 (KHIRNFSIVA…EIVKKVPAPN (183 aa)) enclose the tr-type G domain. GTP-binding positions include 23–28 (DHGKST) and 140–143 (NKID).

Belongs to the TRAFAC class translation factor GTPase superfamily. Classic translation factor GTPase family. LepA subfamily.

It localises to the cell membrane. The enzyme catalyses GTP + H2O = GDP + phosphate + H(+). In terms of biological role, required for accurate and efficient protein synthesis under certain stress conditions. May act as a fidelity factor of the translation reaction, by catalyzing a one-codon backward translocation of tRNAs on improperly translocated ribosomes. Back-translocation proceeds from a post-translocation (POST) complex to a pre-translocation (PRE) complex, thus giving elongation factor G a second chance to translocate the tRNAs correctly. Binds to ribosomes in a GTP-dependent manner. This is Elongation factor 4 from Lactobacillus gasseri (strain ATCC 33323 / DSM 20243 / BCRC 14619 / CIP 102991 / JCM 1131 / KCTC 3163 / NCIMB 11718 / NCTC 13722 / AM63).